Reading from the N-terminus, the 77-residue chain is Acyl carrier protein (77 aa).

Residues 2–77 (SSIEKRVKEI…DAIDYITEHT (76 aa)) form the Carrier domain. Ser37 carries the O-(pantetheine 4'-phosphoryl)serine modification.

It belongs to the acyl carrier protein (ACP) family. In terms of processing, 4'-phosphopantetheine is transferred from CoA to a specific serine of apo-ACP by AcpS. This modification is essential for activity because fatty acids are bound in thioester linkage to the sulfhydryl of the prosthetic group.

It localises to the cytoplasm. It participates in lipid metabolism; fatty acid biosynthesis. In terms of biological role, carrier of the growing fatty acid chain in fatty acid biosynthesis. The sequence is that of Acyl carrier protein from Geobacter sulfurreducens (strain ATCC 51573 / DSM 12127 / PCA).